The sequence spans 443 residues: Chromosome partition protein MukF (443 aa).

Residues 209-237 (LDETSINLRELQDTLNAAGDKLQSQLLRI) are leucine-zipper.

It belongs to the MukF family. In terms of assembly, interacts, and probably forms a ternary complex, with MukE and MukB via its C-terminal region. The complex formation is stimulated by calcium or magnesium. It is required for an interaction between MukE and MukB.

The protein localises to the cytoplasm. It is found in the nucleoid. In terms of biological role, involved in chromosome condensation, segregation and cell cycle progression. May participate in facilitating chromosome segregation by condensation DNA from both sides of a centrally located replisome during cell division. Not required for mini-F plasmid partitioning. Probably acts via its interaction with MukB and MukE. Overexpression results in anucleate cells. It has a calcium binding activity. This chain is Chromosome partition protein MukF, found in Haemophilus ducreyi (strain 35000HP / ATCC 700724).